The sequence spans 386 residues: Protein-glutamate methylesterase/protein-glutamine glutaminase 3 (386 aa).

One can recognise a Response regulatory domain in the interval Lys-4–Leu-121. Asp-55 is subject to 4-aspartylphosphate. Low complexity predominate over residues Ser-132–Ser-194. A disordered region spans residues Ser-132 to Ala-197. Residues Pro-191–Glu-383 form the CheB-type methylesterase domain. Residues Ser-210, His-237, and Asp-330 contribute to the active site.

It belongs to the CheB family. In terms of processing, phosphorylated by CheA. Phosphorylation of the N-terminal regulatory domain activates the methylesterase activity.

The protein localises to the cytoplasm. The catalysed reaction is [protein]-L-glutamate 5-O-methyl ester + H2O = L-glutamyl-[protein] + methanol + H(+). It carries out the reaction L-glutaminyl-[protein] + H2O = L-glutamyl-[protein] + NH4(+). Functionally, involved in chemotaxis. Part of a chemotaxis signal transduction system that modulates chemotaxis in response to various stimuli. Catalyzes the demethylation of specific methylglutamate residues introduced into the chemoreceptors (methyl-accepting chemotaxis proteins or MCP) by CheR. Also mediates the irreversible deamidation of specific glutamine residues to glutamic acid. The polypeptide is Protein-glutamate methylesterase/protein-glutamine glutaminase 3 (Pseudomonas syringae pv. syringae (strain B728a)).